We begin with the raw amino-acid sequence, 209 residues long: uncharacterized protein (209 aa).

This is an uncharacterized protein from Sulfolobus islandicus rod-shaped virus 1 (SIRV-1).